The primary structure comprises 125 residues: MAVCIIDHGNIRGVIYFEPVHGKDKVLGSVIGLKSGTYSLIIHRYGDISRGCESIGSPEIFIGNIFVNRYGVAYVYLDTDVNISTIIGKALSISKNDQRLACGVIGISFINEKIIHFLTINENGV.

An intrachain disulfide couples cysteine 52 to cysteine 102.

Belongs to the Cu-Zn superoxide dismutase family.

It localises to the virion. The protein resides in the host cytoplasm. Functionally, superoxide dismutase-like protein with no enzymatic activity. The protein is Cu-Zn superoxide dismutase-like protein OPG175 (OPG175) of Cowpox virus (strain Brighton Red) (CPV).